The following is a 172-amino-acid chain: Adenine phosphoribosyltransferase (172 aa).

This sequence belongs to the purine/pyrimidine phosphoribosyltransferase family. In terms of assembly, homodimer.

Its subcellular location is the cytoplasm. It catalyses the reaction AMP + diphosphate = 5-phospho-alpha-D-ribose 1-diphosphate + adenine. Its pathway is purine metabolism; AMP biosynthesis via salvage pathway; AMP from adenine: step 1/1. Functionally, catalyzes a salvage reaction resulting in the formation of AMP, that is energically less costly than de novo synthesis. This chain is Adenine phosphoribosyltransferase, found in Staphylococcus saprophyticus subsp. saprophyticus (strain ATCC 15305 / DSM 20229 / NCIMB 8711 / NCTC 7292 / S-41).